We begin with the raw amino-acid sequence, 229 residues long: Ribosome maturation factor RimM (229 aa).

The segment at 1–37 (MAGHDSGNAKRGRSPSFGVFVRKPVERTSAKGTSDGA) is disordered. Residues 148 to 229 (ADEFYWVDLI…RVVVDWEADY (82 aa)) form the PRC barrel domain.

Belongs to the RimM family. As to quaternary structure, binds ribosomal protein uS19.

The protein resides in the cytoplasm. Functionally, an accessory protein needed during the final step in the assembly of 30S ribosomal subunit, possibly for assembly of the head region. Essential for efficient processing of 16S rRNA. May be needed both before and after RbfA during the maturation of 16S rRNA. It has affinity for free ribosomal 30S subunits but not for 70S ribosomes. The chain is Ribosome maturation factor RimM from Burkholderia pseudomallei (strain 668).